A 368-amino-acid chain; its full sequence is Aminomethyltransferase (368 aa).

It belongs to the GcvT family. The glycine cleavage system is composed of four proteins: P, T, L and H.

It carries out the reaction N(6)-[(R)-S(8)-aminomethyldihydrolipoyl]-L-lysyl-[protein] + (6S)-5,6,7,8-tetrahydrofolate = N(6)-[(R)-dihydrolipoyl]-L-lysyl-[protein] + (6R)-5,10-methylene-5,6,7,8-tetrahydrofolate + NH4(+). Its function is as follows. The glycine cleavage system catalyzes the degradation of glycine. This is Aminomethyltransferase from Thermoanaerobacter pseudethanolicus (strain ATCC 33223 / 39E) (Clostridium thermohydrosulfuricum).